The following is a 305-amino-acid chain: Porphobilinogen deaminase (305 aa).

The residue at position 239 (Cys239) is an S-(dipyrrolylmethanemethyl)cysteine.

Belongs to the HMBS family. Monomer. It depends on dipyrromethane as a cofactor.

The catalysed reaction is 4 porphobilinogen + H2O = hydroxymethylbilane + 4 NH4(+). It participates in porphyrin-containing compound metabolism; protoporphyrin-IX biosynthesis; coproporphyrinogen-III from 5-aminolevulinate: step 2/4. In terms of biological role, tetrapolymerization of the monopyrrole PBG into the hydroxymethylbilane pre-uroporphyrinogen in several discrete steps. The chain is Porphobilinogen deaminase from Dichelobacter nodosus (strain VCS1703A).